Consider the following 461-residue polypeptide: Photosystem II CP43 reaction center protein (461 aa).

The propeptide occupies 1 to 2 (ME). Threonine 3 is subject to N-acetylthreonine. The residue at position 3 (threonine 3) is a Phosphothreonine. 5 helical membrane-spanning segments follow: residues 57–81 (LFEV…PHLA), 122–143 (IIGP…KDKN), 166–188 (KAMF…RVIS), 243–263 (KPFS…LSYS), and 279–300 (WFNN…ASQA). Residue glutamate 355 coordinates [CaMn4O5] cluster. A helical transmembrane segment spans residues 435–459 (RARAASGGFEKGLDRENEPVLSMKL).

It belongs to the PsbB/PsbC family. PsbC subfamily. As to quaternary structure, PSII is composed of 1 copy each of membrane proteins PsbA, PsbB, PsbC, PsbD, PsbE, PsbF, PsbH, PsbI, PsbJ, PsbK, PsbL, PsbM, PsbT, PsbX, PsbY, PsbZ, Psb30/Ycf12, at least 3 peripheral proteins of the oxygen-evolving complex and a large number of cofactors. It forms dimeric complexes. Binds multiple chlorophylls and provides some of the ligands for the Ca-4Mn-5O cluster of the oxygen-evolving complex. It may also provide a ligand for a Cl- that is required for oxygen evolution. PSII binds additional chlorophylls, carotenoids and specific lipids. serves as cofactor.

It localises to the plastid. Its subcellular location is the cyanelle thylakoid membrane. One of the components of the core complex of photosystem II (PSII). It binds chlorophyll and helps catalyze the primary light-induced photochemical processes of PSII. PSII is a light-driven water:plastoquinone oxidoreductase, using light energy to abstract electrons from H(2)O, generating O(2) and a proton gradient subsequently used for ATP formation. In Cyanophora paradoxa, this protein is Photosystem II CP43 reaction center protein.